A 131-amino-acid polypeptide reads, in one-letter code: Large ribosomal subunit protein bL17 (131 aa).

Belongs to the bacterial ribosomal protein bL17 family. As to quaternary structure, part of the 50S ribosomal subunit. Contacts protein L32.

The chain is Large ribosomal subunit protein bL17 from Cupriavidus necator (strain ATCC 17699 / DSM 428 / KCTC 22496 / NCIMB 10442 / H16 / Stanier 337) (Ralstonia eutropha).